The sequence spans 365 residues: Glycerol dehydrogenase (365 aa).

NAD(+)-binding residues include aspartate 37, glycine 94, lysine 95, threonine 116, and serine 119. Aspartate 121 contacts glycerol. NAD(+) is bound by residues serine 125, leucine 127, and tyrosine 131. Residues aspartate 171, histidine 254, and histidine 271 each contribute to the Zn(2+) site. Glycerol is bound at residue histidine 254.

Belongs to the iron-containing alcohol dehydrogenase family. Zn(2+) serves as cofactor.

It catalyses the reaction glycerol + NAD(+) = dihydroxyacetone + NADH + H(+). It functions in the pathway polyol metabolism; glycerol fermentation; glycerone phosphate from glycerol (oxidative route): step 1/2. Catalyzes the NAD-dependent oxidation of glycerol to dihydroxyacetone (glycerone). Allows microorganisms to utilize glycerol as a source of carbon under anaerobic conditions. This Pseudomonas putida (Arthrobacter siderocapsulatus) protein is Glycerol dehydrogenase (gldA).